The sequence spans 306 residues: Bifunctional protein FolD (306 aa).

NADP(+) is bound by residues 166 to 168 (GRS) and Ile-232.

Belongs to the tetrahydrofolate dehydrogenase/cyclohydrolase family. In terms of assembly, homodimer.

The catalysed reaction is (6R)-5,10-methylene-5,6,7,8-tetrahydrofolate + NADP(+) = (6R)-5,10-methenyltetrahydrofolate + NADPH. It carries out the reaction (6R)-5,10-methenyltetrahydrofolate + H2O = (6R)-10-formyltetrahydrofolate + H(+). Its pathway is one-carbon metabolism; tetrahydrofolate interconversion. Functionally, catalyzes the oxidation of 5,10-methylenetetrahydrofolate to 5,10-methenyltetrahydrofolate and then the hydrolysis of 5,10-methenyltetrahydrofolate to 10-formyltetrahydrofolate. In Methylorubrum extorquens (strain CM4 / NCIMB 13688) (Methylobacterium extorquens), this protein is Bifunctional protein FolD.